A 231-amino-acid chain; its full sequence is NKG2-C type II integral membrane protein (231 aa).

Over residues 1 to 12 (MNKQRGTFSEVS) the composition is skewed to polar residues. Residues 1–32 (MNKQRGTFSEVSLAQDPKRQQRKPKGNKSSIS) form a disordered region. Over 1 to 70 (MNKQRGTFSE…CQGLLPPPEK (70 aa)) the chain is Cytoplasmic. Residues 71–93 (LTAEVLGIICIVLMATVLKTIVL) traverse the membrane as a helical; Signal-anchor for type II membrane protein segment. Topologically, residues 94 to 231 (IPFLEQNNFS…SMIYHCKHKL (138 aa)) are extracellular. The N-linked (GlcNAc...) asparagine glycan is linked to asparagine 100. Residues 116 to 229 (HCPEEWITYS…GSSMIYHCKH (114 aa)) enclose the C-type lectin domain. 3 disulfides stabilise this stretch: cysteine 117–cysteine 128, cysteine 145–cysteine 227, and cysteine 206–cysteine 219. Asparagine 149 and asparagine 178 each carry an N-linked (GlcNAc...) asparagine glycan.

Heterodimer with KLRD1; disulfide-linked. KLRD1-KLRC2 receptor complex interacts with TYROBP homodimer; this interaction is necessary for the expression on the cell surface. KLRD1-KLRC2 receptor complex can bind with low affinity to HLA-E loaded with self-peptides derived from the signal sequence of classical MHC class Ia. In terms of tissue distribution, expressed in NK cell subsets, in particular in adaptive CD57-positive NK cells (at protein level). Expressed in terminally differentiated cytotoxic gamma-delta T cells (at protein level). Expressed in alpha-beta T cells subsets (at protein level). KLRD1-KLRC1 and KLRD1-KLRC2 are differentially expressed within NK and T cell populations, with only minor subsets expressing both receptor complexes (at protein level).

The protein localises to the cell membrane. Immune activating receptor involved in self-nonself discrimination. In complex with KLRD1 on cytotoxic lymphocyte subsets, recognizes non-classical major histocompatibility (MHC) class Ib HLA-E loaded with signal sequence-derived peptides from non-classical MHC class Ib HLA-G molecules, likely playing a role in the generation and effector functions of adaptive natural killer (NK) cells and in maternal-fetal tolerance during pregnancy. Regulates the effector functions of terminally differentiated cytotoxic lymphocyte subsets, and in particular may play a role in adaptive NK cell response to viral infection. Upon HLA-E-peptide binding, transmits intracellular signals via the adapter protein TYROBP/DAP12, triggering the phosphorylation of proximal signaling molecules and cell activation. The sequence is that of NKG2-C type II integral membrane protein (KLRC2) from Homo sapiens (Human).